The primary structure comprises 596 residues: Aspartic proteinase MKC7 (596 aa).

The N-terminal stretch at Met-1–Ala-22 is a signal peptide. Residues Gly-23–Arg-65 constitute a propeptide that is removed on maturation. Residues Tyr-81–Ala-468 enclose the Peptidase A1 domain. The active site involves Asp-99. N-linked (GlcNAc...) asparagine glycans are attached at residues Asn-180, Asn-190, Asn-219, Asn-229, Asn-232, Asn-286, and Asn-346. Asp-360 is an active-site residue. N-linked (GlcNAc...) asparagine glycosylation is found at Asn-471 and Asn-517. Over residues Ala-530–Ser-570 the composition is skewed to low complexity. The segment at Ala-530 to His-578 is disordered. The GPI-anchor amidated asparagine moiety is linked to residue Asn-575. A propeptide spans Gly-576–Ile-596 (removed in mature form).

This sequence belongs to the peptidase A1 family.

Its subcellular location is the cell membrane. It catalyses the reaction Hydrolyzes various precursor proteins with Arg or Lys in P1, and commonly Arg or Lys also in P2. The P3 amino acid is usually non-polar, but otherwise additional basic amino acids are favorable in both non-prime and prime positions.. In terms of biological role, cleaves proteins C-terminally to the most C-terminal basic residue. Can process the alpha-mating factor precursor. Required for cell wall integrity. This chain is Aspartic proteinase MKC7 (MKC7), found in Saccharomyces cerevisiae (strain ATCC 204508 / S288c) (Baker's yeast).